The chain runs to 131 residues: MRNLLLVAAVALSTAGCGIIYKQPIYQGNLIKQTAVEQLQVGQSKQQVSALLGTPSIPDPFHAQRWDYTSTQRVDRLARTDVKNFTVFFENEQVVRWEGDYFPAQDEQLAKSAPKQFGRNLARDKKKQRGR.

Residues 1 to 16 (MRNLLLVAAVALSTAG) form the signal peptide. Cys-17 carries N-palmitoyl cysteine lipidation. Cys-17 carries the S-diacylglycerol cysteine lipid modification. Residues 112–131 (SAPKQFGRNLARDKKKQRGR) form a disordered region.

This sequence belongs to the BamE family. In terms of assembly, part of the Bam complex.

Its subcellular location is the cell outer membrane. Part of the outer membrane protein assembly complex, which is involved in assembly and insertion of beta-barrel proteins into the outer membrane. This is Outer membrane protein assembly factor BamE from Xanthomonas campestris pv. campestris (strain ATCC 33913 / DSM 3586 / NCPPB 528 / LMG 568 / P 25).